The primary structure comprises 1854 residues: Calcium-channel protein cch1 (1854 aa).

Over residues 1 to 15 (MSSSSNSDPSSSPDN) the composition is skewed to low complexity. The interval 1 to 33 (MSSSSNSDPSSSPDNTDFIPLKDNPKDTSSYIN) is disordered. Asparagine 40 is a glycosylation site (N-linked (GlcNAc...) asparagine). Helical transmembrane passes span 184–204 (HPLY…LLMI), 220–240 (IIVI…LFGF), and 274–294 (DFVA…QGIF). The N-linked (GlcNAc...) asparagine glycan is linked to asparagine 310. 8 helical membrane passes run 328-348 (PLVQ…ILGV), 427-447 (FFNS…TDIM), 461-481 (LFII…IAVV), 514-534 (YLFY…VTLC), 549-569 (LIFY…RFFA), 581-601 (YTNL…LPSI), 606-626 (VAFG…ILLI), and 642-662 (QLLN…LCAV). An N-linked (GlcNAc...) asparagine glycan is attached at asparagine 699. A helical membrane pass occupies residues 723 to 743 (FFTLWFLFSNNVVLSMFIAVI). Asparagine 786 is a glycosylation site (N-linked (GlcNAc...) asparagine). Transmembrane regions (helical) follow at residues 946–966 (VFIY…TPIY), 980–1000 (FVWT…IKII), and 1021–1041 (FFVL…HALL). A glycan (N-linked (GlcNAc...) asparagine) is linked at asparagine 1058. A run of 2 helical transmembrane segments spans residues 1075–1095 (FFKI…FALW) and 1148–1168 (FPHA…VDIM). N-linked (GlcNAc...) asparagine glycosylation occurs at asparagine 1184. 4 helical membrane passes run 1193-1213 (FVLF…AIII), 1274-1294 (FTGL…PCPI), 1302-1322 (SIFL…VYGL), and 1331-1351 (FWNM…IAIL). N-linked (GlcNAc...) asparagine glycosylation occurs at asparagine 1356. Transmembrane regions (helical) follow at residues 1358 to 1378 (SLTL…IPKF), 1393 to 1413 (PSIF…AIAF), and 1486 to 1506 (FIAW…TVVF). N-linked (GlcNAc...) asparagine glycosylation is found at asparagine 1508 and asparagine 1773. A disordered region spans residues 1764–1792 (TIASGEGDDNHSVEDHLKVPTDNEPRRSP). Residues 1771 to 1790 (DDNHSVEDHLKVPTDNEPRR) show a composition bias toward basic and acidic residues.

The protein belongs to the calcium channel alpha-1 subunit (TC 1.A.1.11) family. As to quaternary structure, interacts with yam8 to form a Ca(2+) influx channel.

The protein localises to the cell membrane. Voltage-gated, high-affinity calcium channel that functions together with yam8 to mediate calcium entry into cells. Required during conditions of environmental stress. This Schizosaccharomyces pombe (strain 972 / ATCC 24843) (Fission yeast) protein is Calcium-channel protein cch1 (cch1).